Consider the following 482-residue polypeptide: Probable glycine dehydrogenase (decarboxylating) subunit 2 (482 aa).

Lys-267 bears the N6-(pyridoxal phosphate)lysine mark.

It belongs to the GcvP family. C-terminal subunit subfamily. The glycine cleavage system is composed of four proteins: P, T, L and H. In this organism, the P 'protein' is a heterodimer of two subunits. Pyridoxal 5'-phosphate is required as a cofactor.

It carries out the reaction N(6)-[(R)-lipoyl]-L-lysyl-[glycine-cleavage complex H protein] + glycine + H(+) = N(6)-[(R)-S(8)-aminomethyldihydrolipoyl]-L-lysyl-[glycine-cleavage complex H protein] + CO2. Its function is as follows. The glycine cleavage system catalyzes the degradation of glycine. The P protein binds the alpha-amino group of glycine through its pyridoxal phosphate cofactor; CO(2) is released and the remaining methylamine moiety is then transferred to the lipoamide cofactor of the H protein. This is Probable glycine dehydrogenase (decarboxylating) subunit 2 from Aquifex aeolicus (strain VF5).